Here is a 770-residue protein sequence, read N- to C-terminus: POU domain, class 2, transcription factor 1 (770 aa).

Positions 1–26 (MNNPSETNKSSMESEDASTGTQTNGL) are enriched in polar residues. Disordered stretches follow at residues 1–33 (MNNP…KQPV), 68–97 (LNVQ…VQSA), 262–285 (VQTL…EPSD), and 357–385 (LSSD…RRKK). Low complexity predominate over residues 80-97 (DSQQSSQPSSQPPSVQSA). Positions 262-272 (VQTLPQSQSTP) are enriched in polar residues. Residues Thr271 and Thr277 each carry the phosphothreonine modification. A POU-specific domain is found at 281 to 355 (EEPSDLEELE…LLEKWLNDAE (75 aa)). Ser284 carries the phosphoserine modification. Residues 357-372 (LSSDSTASSPSALNSP) are compositionally biased toward low complexity. Positions 382–441 (RRKKRTSIETNIRVALEKSFMENQKPTSEDITLIAEQLNMEKEVIRVWFCNRRQKEKRIN) form a DNA-binding region, homeobox. Phosphoserine is present on residues Ser388 and Ser451. A compositionally biased stretch (low complexity) spans 519-580 (TTTAGTTDST…TNTTQTTSTP (62 aa)). The interval 519–589 (TTTAGTTDST…PLPSPLGASQ (71 aa)) is disordered.

It belongs to the POU transcription factor family. Class-2 subfamily. As to quaternary structure, interacts with POU2AF1; the interaction increases POU2F1 transactivation activity. Interacts with NR3C1, AR, PGR and HCFC1. In terms of processing, phosphorylated by PRKDC. Ubiquitously expressed. However, isoforms 4 and 5 are only expressed in lymphocytes.

Its subcellular location is the nucleus. Its function is as follows. Transcription factor that binds to the octamer motif (5'-ATTTGCAT-3') and activates the promoters of the genes for some small nuclear RNAs (snRNA) and of genes such as those for histone H2B and immunoglobulins. Modulates transcription transactivation by NR3C1, AR and PGR. The sequence is that of POU domain, class 2, transcription factor 1 (Pou2f1) from Mus musculus (Mouse).